The primary structure comprises 180 residues: Crossover junction endodeoxyribonuclease RuvC (180 aa).

Residues Asp7, Glu66, and Asp138 contribute to the active site. Residues Asp7, Glu66, and Asp138 each coordinate Mg(2+).

The protein belongs to the RuvC family. In terms of assembly, homodimer which binds Holliday junction (HJ) DNA. The HJ becomes 2-fold symmetrical on binding to RuvC with unstacked arms; it has a different conformation from HJ DNA in complex with RuvA. In the full resolvosome a probable DNA-RuvA(4)-RuvB(12)-RuvC(2) complex forms which resolves the HJ. Requires Mg(2+) as cofactor.

It is found in the cytoplasm. It catalyses the reaction Endonucleolytic cleavage at a junction such as a reciprocal single-stranded crossover between two homologous DNA duplexes (Holliday junction).. Its function is as follows. The RuvA-RuvB-RuvC complex processes Holliday junction (HJ) DNA during genetic recombination and DNA repair. Endonuclease that resolves HJ intermediates. Cleaves cruciform DNA by making single-stranded nicks across the HJ at symmetrical positions within the homologous arms, yielding a 5'-phosphate and a 3'-hydroxyl group; requires a central core of homology in the junction. The consensus cleavage sequence is 5'-(A/T)TT(C/G)-3'. Cleavage occurs on the 3'-side of the TT dinucleotide at the point of strand exchange. HJ branch migration catalyzed by RuvA-RuvB allows RuvC to scan DNA until it finds its consensus sequence, where it cleaves and resolves the cruciform DNA. The sequence is that of Crossover junction endodeoxyribonuclease RuvC from Paraburkholderia xenovorans (strain LB400).